The chain runs to 263 residues: MRVAFKIAYDGTRFHGFQRQPNLRTVEGEIIKALNNSGIMYSDFKSASRTDRGVSALGNVVAITTEDEKALNPMVLNARLEDVWILSAIEVPQDFHPRFWAKSKVYRYYLPSIGLEVEKVKECSQLFLGVHDFSAFSRVDGRDTVRSIDRIEVFTLGPILIIEIEAKSFLWEMVRRIVKALELCGLGRLSCEEIKEMLEGKFEKSKKVPPAPPEGLLLVDIKYEGIEFPLNDKALKKFKREVEERFRQKIMGAYLLWDMIQLL.

The active-site Nucleophile is the aspartate 51. A substrate-binding site is contributed by tyrosine 106.

The protein belongs to the tRNA pseudouridine synthase TruA family.

The catalysed reaction is uridine(38/39/40) in tRNA = pseudouridine(38/39/40) in tRNA. Formation of pseudouridine at positions 38, 39 and 40 in the anticodon stem and loop of transfer RNAs. The sequence is that of tRNA pseudouridine synthase A from Pyrococcus abyssi (strain GE5 / Orsay).